The sequence spans 704 residues: Elongation factor G (704 aa).

A tr-type G domain is found at 8–291 (DKVRNIGIMA…AVVDYLASPL (284 aa)). GTP-binding positions include 17-24 (AHIDAGKT), 90-94 (DTPGH), and 144-147 (NKMD).

The protein belongs to the TRAFAC class translation factor GTPase superfamily. Classic translation factor GTPase family. EF-G/EF-2 subfamily.

It localises to the cytoplasm. Its function is as follows. Catalyzes the GTP-dependent ribosomal translocation step during translation elongation. During this step, the ribosome changes from the pre-translocational (PRE) to the post-translocational (POST) state as the newly formed A-site-bound peptidyl-tRNA and P-site-bound deacylated tRNA move to the P and E sites, respectively. Catalyzes the coordinated movement of the two tRNA molecules, the mRNA and conformational changes in the ribosome. In Chlorobium luteolum (strain DSM 273 / BCRC 81028 / 2530) (Pelodictyon luteolum), this protein is Elongation factor G.